Consider the following 1705-residue polypeptide: Receptor-type tyrosine-protein phosphatase V (1705 aa).

The first 18 residues, 1–18 (MRPLILLAALLWLQDSLA), serve as a signal peptide directing secretion. Topologically, residues 19 to 1077 (QEDVCSSLDG…QASISLVAMP (1059 aa)) are extracellular. The disordered stretch occupies residues 24 to 44 (SSLDGSPDRQGGGPPLSVSVT). Fibronectin type-III domains lie at 37–129 (PPLS…TAPT), 130–222 (VVRG…VPPD), 218–305 (PVPP…EWTY), 306–388 (PSYP…SIWL), 393–454 (ARPM…HYRV), 475–569 (PPQS…APPT), 565–654 (PAPP…TGWT), 655–749 (PPSA…TPNE), 744–831 (PLTP…VLSV), and 832–926 (EPGP…SAEV). Asn74, Asn89, Asn117, Asn174, Asn239, Asn259, Asn299, Asn345, Asn431, Asn551, Asn570, Asn620, Asn649, Asn663, and Asn737 each carry an N-linked (GlcNAc...) asparagine glycan. N-linked (GlcNAc...) asparagine glycosylation is found at Asn851, Asn882, Asn970, and Asn982. A helical transmembrane segment spans residues 1078–1100 (LTVMMGTVVGCIIIVCAVLCLLC). Over 1101-1705 (RRGLKGPRSE…LRNRLPRARK (605 aa)) the chain is Cytoplasmic. Tyrosine-protein phosphatase domains follow at residues 1150–1409 (FFQE…LLNK) and 1427–1695 (NFAQ…LNSA). Substrate is bound by residues Asp1316, 1350–1356 (CSAGVGR), and Gln1394. The active-site Phosphocysteine intermediate is Cys1350.

It belongs to the protein-tyrosine phosphatase family. Receptor class 3 subfamily.

Its subcellular location is the membrane. The enzyme catalyses O-phospho-L-tyrosyl-[protein] + H2O = L-tyrosyl-[protein] + phosphate. In terms of biological role, protein tyrosine phosphatase that acts as a regulator of energy metabolism by mediating dephosphorylation of insulin receptor (Insr). Prevents decarboxylation of osteocalcin (Bglap and Bglap2) via an indirect mechanism: dephosphorylation of insulin receptor prevents insulin signaling-dependent decarboxylation of osteocalcin, preventing the hormone activity of osteocalcin. May play a role in the maintenance of pluripotency. In Mus musculus (Mouse), this protein is Receptor-type tyrosine-protein phosphatase V (Ptprv).